The sequence spans 153 residues: Protein eva-1 homolog A (153 aa).

Residues 37–57 (ALYFVCGVCLGLVLTLIALVV) form a helical membrane-spanning segment. Residues 66–97 (KTQQAPKKTGKTVENTSDTSDSDSDWDNTSDL) form a disordered region.

The protein belongs to the EVA1 family.

It is found in the endoplasmic reticulum membrane. It localises to the lysosome membrane. In terms of biological role, acts as a regulator of programmed cell death, mediating both autophagy and apoptosis. The polypeptide is Protein eva-1 homolog A (Eva1a) (Danio rerio (Zebrafish)).